The primary structure comprises 84 residues: MSDKIRTQLGRVVSDKMDKSIVVAIERMVKHPIYGKFVKRTTKVHAHDENNECGIGDTVEIRECRPLSKTKSWTLVKIVEKAKM.

This sequence belongs to the universal ribosomal protein uS17 family. As to quaternary structure, part of the 30S ribosomal subunit.

One of the primary rRNA binding proteins, it binds specifically to the 5'-end of 16S ribosomal RNA. This Vibrio cholerae serotype O1 (strain ATCC 39541 / Classical Ogawa 395 / O395) protein is Small ribosomal subunit protein uS17.